The following is a 566-amino-acid chain: MKQSMVFSPTLREVPADAEIKSHQLLLRAGFMRQNASGIYSFLPFGLKVLHKVERIVREEMERAGAVELLMPAMQASELWQESGRWYSYGSELMRMKDRNAREFALGATHEEVITDLVRDEIKSYKKLPLTLYQIQTKFRDEQRPRFGLLRGREFLMKDAYSFHATQESLDEVYSGLYKAYSNIFARCGLNFRAVIADSGAMGGKDTHEFMVLSDVGEDTIAYSDTSDYAANIEMAPVVATYTKSDEAEKALEKVATPDQKAIEEVSAFLNIAAEKCIKSMVFKVDAKLVVVLVRGDHEVNDVKVKNVYGASVVELASHEEIKELLNCEVGSLGPIGVTGDIEIIADHAVASIVNGCSGANEEGFHYVNVNPERDFKVSQYTDLRFIQEGDQSPDGNGTILFARGIEVGHVFKLGTRYSEAMNATFLDENGKTKPLIMGCYGIGVSRTVAAIAEQFNDENGLVWPKSVAPFHVHVIPVNMKSDAQREMGENIYNSLQEQGYEVLLDDRAERAGVKFADADLFGLPVRVTVGKKADEGIVEVKVRATGESEEVKVEELQTYIANILK.

The protein belongs to the class-II aminoacyl-tRNA synthetase family. ProS type 1 subfamily. As to quaternary structure, homodimer.

It is found in the cytoplasm. The catalysed reaction is tRNA(Pro) + L-proline + ATP = L-prolyl-tRNA(Pro) + AMP + diphosphate. In terms of biological role, catalyzes the attachment of proline to tRNA(Pro) in a two-step reaction: proline is first activated by ATP to form Pro-AMP and then transferred to the acceptor end of tRNA(Pro). As ProRS can inadvertently accommodate and process non-cognate amino acids such as alanine and cysteine, to avoid such errors it has two additional distinct editing activities against alanine. One activity is designated as 'pretransfer' editing and involves the tRNA(Pro)-independent hydrolysis of activated Ala-AMP. The other activity is designated 'posttransfer' editing and involves deacylation of mischarged Ala-tRNA(Pro). The misacylated Cys-tRNA(Pro) is not edited by ProRS. This is Proline--tRNA ligase from Bacillus mycoides (strain KBAB4) (Bacillus weihenstephanensis).